Consider the following 236-residue polypeptide: Purine nucleoside phosphorylase DeoD-type (236 aa).

His-4 is a binding site for a purine D-ribonucleoside. Phosphate contacts are provided by residues Gly-20, Arg-24, Arg-43, and 87–90; that span reads RVGT. A purine D-ribonucleoside contacts are provided by residues 179 to 181 and 203 to 204; these read EME and SD. Asp-204 serves as the catalytic Proton donor.

Belongs to the PNP/UDP phosphorylase family. As to quaternary structure, homohexamer; trimer of homodimers.

The enzyme catalyses a purine D-ribonucleoside + phosphate = a purine nucleobase + alpha-D-ribose 1-phosphate. The catalysed reaction is a purine 2'-deoxy-D-ribonucleoside + phosphate = a purine nucleobase + 2-deoxy-alpha-D-ribose 1-phosphate. Its function is as follows. Catalyzes the reversible phosphorolytic breakdown of the N-glycosidic bond in the beta-(deoxy)ribonucleoside molecules, with the formation of the corresponding free purine bases and pentose-1-phosphate. In Streptococcus pneumoniae (strain JJA), this protein is Purine nucleoside phosphorylase DeoD-type.